The primary structure comprises 789 residues: Cell pattern formation-associated protein stuA (789 aa).

Disordered stretches follow at residues 50-131 and 205-224; these read PALS…NTVG and PGGVTSSQPGPQPPTTSVSS. Polar residues-rich tracts occupy residues 55 to 69, 76 to 88, and 115 to 131; these read PTASQPPISGQSYRT, ASHNASARTSLSG, and LDSSAPQEFSIPQNTVG. The region spanning 272-378 is the HTH APSES-type domain; the sequence is RVTATLWEDE…HNIGGLLYHP (107 aa). Residues 306–327 constitute a DNA-binding region (H-T-H motif); sequence GTKLLNVAGMTRGRRDGILKSE. 3 disordered regions span residues 389-459, 487-543, and 616-789; these read QESQ…ASSL, SIDT…YAPQ, and HDSA…ARRR. Composition is skewed to polar residues over residues 419 to 438, 487 to 529, 620 to 636, 645 to 667, and 676 to 713; these read LQTPVPSHMSQPHAMTSQSA, SIDT…SKSY, GYNTNRGSYTYTTNPSV, QLASDMSGSPSQQNGSGRMTPRT, and SGYNTPPRSAAVSSLYNSVSETRGASANGTTDNYSVAS. The interval 731 to 758 is nuclear localization domain; it reads KRMREDDDVDQIVRPDSRGAEYESKRRK. A compositionally biased stretch (basic and acidic residues) spans 741 to 754; the sequence is QIVRPDSRGAEYES.

The protein belongs to the EFG1/PHD1/stuA family.

Its subcellular location is the nucleus. Its function is as follows. Transcription factor that regulates asexual reproduction. Binds the StuA-response elements (StRE) with the consensus sequence 5'-(A/T)CGCG(T/A)N(A/C)-3' at the promoters of target genes. The chain is Cell pattern formation-associated protein stuA from Aspergillus flavus (strain ATCC 200026 / FGSC A1120 / IAM 13836 / NRRL 3357 / JCM 12722 / SRRC 167).